The following is a 276-amino-acid chain: Large ribosomal subunit protein uL2 (276 aa).

The segment at 224-265 (VMNPVDHPHGGGEGRTASGRHPVSPWGLPTKGYKTRNNKRTD) is disordered.

Belongs to the universal ribosomal protein uL2 family. Part of the 50S ribosomal subunit. Forms a bridge to the 30S subunit in the 70S ribosome.

In terms of biological role, one of the primary rRNA binding proteins. Required for association of the 30S and 50S subunits to form the 70S ribosome, for tRNA binding and peptide bond formation. It has been suggested to have peptidyltransferase activity; this is somewhat controversial. Makes several contacts with the 16S rRNA in the 70S ribosome. This chain is Large ribosomal subunit protein uL2, found in Dichelobacter nodosus (strain VCS1703A).